The chain runs to 287 residues: MIRRRYRGCTQGAWIVSVGMLFASCTSGAWKASVDPLGVVGSGADVYLYFPVAGNENLISRIIENHESKADIKKIVDRTTAVYGAFFARSKEFRLFGSGSYPYAFTNLIFSRSDGWASTKTEHGITYYESEHTDVSIPAPHFSCVIFGSSKRERMSKMLSRLVNPDRPQLPPRFEKECTSEGTSQTVALYIKNGGHFITKLLNFPQLNLPLGAMELYLTARRNEYLYTLSLQLGNAKINFPIQFLISRVLNAHIHVEGDRLIIEDGTISAERLASVISSLYSKKGSS.

Positions 1-24 (MIRRRYRGCTQGAWIVSVGMLFAS) are cleaved as a signal peptide. Residue Cys-25 is the site of N-palmitoyl cysteine attachment. Cys-25 carries S-diacylglycerol cysteine lipidation. 9 amphipathic helix regions span residues 36-40 (PLGVV), 56-63 (ENLISRII), 69-77 (KADIKKIVD), 103-112 (YAFTNLIFSR), 155-162 (MSKMLSRL), 172-179 (PRFEKECT), 194-202 (GGHFITKLL), 240-250 (FPIQFLISRVL), and 270-279 (AERLASVISS).

As to quaternary structure, a mix of monomer and dimers; may integrate into the membrane as a dimer. Post-translationally, palmitoylated upon expression of a fusion protein with first 46 residues fused to PhoA in E.coli.

It localises to the cell outer membrane. Functionally, might be involved in ligand transport, alters membrane permeability at acidic pH (4.0 to 5.5). Incubation of the non-lipidated form with lipid vesicles increases their permeability. The polypeptide is Outer membrane protein TP0453 (Treponema pallidum (strain Nichols)).